A 339-amino-acid polypeptide reads, in one-letter code: MSIARRTTLSKFLIEQQRETNNLPADLRLLIEVVARACKAISYNVSKGALGEALGTAGSENVQGEVQKKLDILSNEILLDANEWGGNLAAMASEEMETFFPIPANYPRGEYLLVFDPLDGSSNIDVNVSIGTIFSVLRCPDGKQATEESFLQPGTEQVAAGYAVYGPQTVFVLTTGNGVNCFTLDREVGSWVLTQSNMQIPADTREYAINASNARHWYEPVQRYVDELNAGKDGPRGDNFNMRWIASMVADVHRILNRGGIFMYPADKRTPDRPGKLRLMYEANPMSFIVEQAGGAATTGTQRIMEVQPTGLHQRVPVFLGSKNEVERVTSYHAEGEGK.

Residues Glu94, Asp116, Leu118, and Asp119 each contribute to the Mg(2+) site. Residues 119-122, Asn210, and Lys276 contribute to the substrate site; that span reads DGSS. Residue Glu282 participates in Mg(2+) binding.

This sequence belongs to the FBPase class 1 family. In terms of assembly, homotetramer. Mg(2+) is required as a cofactor.

The protein localises to the cytoplasm. The enzyme catalyses beta-D-fructose 1,6-bisphosphate + H2O = beta-D-fructose 6-phosphate + phosphate. It functions in the pathway carbohydrate biosynthesis; gluconeogenesis. This chain is Fructose-1,6-bisphosphatase class 1, found in Burkholderia ambifaria (strain MC40-6).